Reading from the N-terminus, the 121-residue chain is Large ribosomal subunit protein eL31 (121 aa).

Belongs to the eukaryotic ribosomal protein eL31 family.

This is Large ribosomal subunit protein eL31 (RPL31) from Panax ginseng (Korean ginseng).